Here is a 611-residue protein sequence, read N- to C-terminus: Endo-1,4-beta-xylanase A (611 aa).

Residues 1–26 form the signal peptide; it reads MRTAMAKSLGAAAFLGAALFAHTLAA. The CBM2 domain occupies 27–128; that stretch reads QTATCSYNIT…SVGGSICSGS (102 aa). Disulfide bonds link Cys31/Cys125, Cys184/Cys215, and Cys194/Cys209. In terms of domain architecture, CBM10 spans 183–212; that stretch reads QCNWYGTLYPLCVTTTNGWGWEDQRSCIAR. Positions 281–607 constitute a GH10 domain; the sequence is SGGNADIFTS…KPAYQGVVEA (327 aa). Residue Glu391 is the Proton donor of the active site. Glu510 acts as the Nucleophile in catalysis.

This sequence belongs to the glycosyl hydrolase 10 (cellulase F) family.

It catalyses the reaction Endohydrolysis of (1-&gt;4)-beta-D-xylosidic linkages in xylans.. It participates in glycan degradation; xylan degradation. This chain is Endo-1,4-beta-xylanase A (xynA), found in Cellvibrio japonicus (strain Ueda107) (Pseudomonas fluorescens subsp. cellulosa).